Consider the following 146-residue polypeptide: Large ribosomal subunit protein uL15 (146 aa).

The tract at residues 1–53 is disordered; sequence MILSNLKPVPGARHSKKRLGRGPGSGTGKTSGKGHKGQKARSGGGVRPGFEGG. Composition is skewed to gly residues over residues 21-31 and 42-52; these read RGPGSGTGKTS and SGGGVRPGFEG.

This sequence belongs to the universal ribosomal protein uL15 family. Part of the 50S ribosomal subunit.

Binds to the 23S rRNA. The chain is Large ribosomal subunit protein uL15 from Acholeplasma laidlawii (strain PG-8A).